A 44-amino-acid chain; its full sequence is Cytochrome b559 subunit beta (44 aa).

Residues 19-35 (WLSIHALAVPTIFFLGS) traverse the membrane as a helical segment. Residue His23 coordinates heme.

This sequence belongs to the PsbE/PsbF family. As to quaternary structure, heterodimer of an alpha subunit and a beta subunit. PSII is composed of 1 copy each of membrane proteins PsbA, PsbB, PsbC, PsbD, PsbE, PsbF, PsbH, PsbI, PsbJ, PsbK, PsbL, PsbM, PsbT, PsbX, PsbY, PsbZ, Psb30/Ycf12, at least 3 peripheral proteins of the oxygen-evolving complex and a large number of cofactors. It forms dimeric complexes. Heme b is required as a cofactor.

It is found in the plastid. The protein localises to the chloroplast thylakoid membrane. In terms of biological role, this b-type cytochrome is tightly associated with the reaction center of photosystem II (PSII). PSII is a light-driven water:plastoquinone oxidoreductase that uses light energy to abstract electrons from H(2)O, generating O(2) and a proton gradient subsequently used for ATP formation. It consists of a core antenna complex that captures photons, and an electron transfer chain that converts photonic excitation into a charge separation. The protein is Cytochrome b559 subunit beta of Tetradesmus obliquus (Green alga).